A 170-amino-acid polypeptide reads, in one-letter code: UPF0260 protein Rpal_2074 (170 aa).

This sequence belongs to the UPF0260 family.

The sequence is that of UPF0260 protein Rpal_2074 from Rhodopseudomonas palustris (strain TIE-1).